We begin with the raw amino-acid sequence, 255 residues long: DNA repair protein RecO (255 aa).

Belongs to the RecO family.

Involved in DNA repair and RecF pathway recombination. The sequence is that of DNA repair protein RecO from Listeria welshimeri serovar 6b (strain ATCC 35897 / DSM 20650 / CCUG 15529 / CIP 8149 / NCTC 11857 / SLCC 5334 / V8).